We begin with the raw amino-acid sequence, 55 residues long: ATP synthase protein 8 (55 aa).

Residues 7-28 (ISWFFNFLLAWFFLFIVVTILL) form a helical membrane-spanning segment.

Belongs to the ATPase protein 8 family. As to quaternary structure, F-type ATPases have 2 components, CF(1) - the catalytic core - and CF(0) - the membrane proton channel.

It is found in the mitochondrion membrane. Mitochondrial membrane ATP synthase (F(1)F(0) ATP synthase or Complex V) produces ATP from ADP in the presence of a proton gradient across the membrane which is generated by electron transport complexes of the respiratory chain. F-type ATPases consist of two structural domains, F(1) - containing the extramembraneous catalytic core and F(0) - containing the membrane proton channel, linked together by a central stalk and a peripheral stalk. During catalysis, ATP synthesis in the catalytic domain of F(1) is coupled via a rotary mechanism of the central stalk subunits to proton translocation. Part of the complex F(0) domain. Minor subunit located with subunit a in the membrane. The polypeptide is ATP synthase protein 8 (MT-ATP8) (Pisaster ochraceus (Ochre sea star)).